The sequence spans 68 residues: MGMRMMFTVFLLVVLATTVVSFTSRRGPKSRRGEPVPTTVINYGECCKDPSCWVKVKDFQCPGASPPN.

The first 21 residues, 1-21 (MGMRMMFTVFLLVVLATTVVS), serve as a signal peptide directing secretion. The propeptide occupies 22–44 (FTSRRGPKSRRGEPVPTTVINYG). Intrachain disulfides connect Cys-46–Cys-52 and Cys-47–Cys-61.

The protein belongs to the conotoxin A superfamily. Expressed by the venom duct.

It is found in the secreted. In terms of biological role, does not show activity on all the human nAChR subtypes studied. The polypeptide is Conotoxin G1.9 (Conus geographus (Geography cone)).